Here is a 448-residue protein sequence, read N- to C-terminus: Glucose-6-phosphate isomerase (448 aa).

Glutamate 290 acts as the Proton donor in catalysis. Catalysis depends on residues histidine 311 and lysine 425.

Belongs to the GPI family.

It is found in the cytoplasm. It carries out the reaction alpha-D-glucose 6-phosphate = beta-D-fructose 6-phosphate. The protein operates within carbohydrate biosynthesis; gluconeogenesis. It functions in the pathway carbohydrate degradation; glycolysis; D-glyceraldehyde 3-phosphate and glycerone phosphate from D-glucose: step 2/4. Its function is as follows. Catalyzes the reversible isomerization of glucose-6-phosphate to fructose-6-phosphate. This chain is Glucose-6-phosphate isomerase, found in Lactococcus lactis subsp. cremoris (strain SK11).